A 196-amino-acid chain; its full sequence is Small ribosomal subunit protein uS4c (196 aa).

Residues 17-36 (ALPGLTRKTPKSGSNLKKKF) form a disordered region. The 69-residue stretch at 89–157 (MRLDNILFRL…VQNYIASSDP (69 aa)) folds into the S4 RNA-binding domain.

It belongs to the universal ribosomal protein uS4 family. Part of the 30S ribosomal subunit. Contacts protein S5. The interaction surface between S4 and S5 is involved in control of translational fidelity.

The protein localises to the plastid. It localises to the chloroplast. One of the primary rRNA binding proteins, it binds directly to 16S rRNA where it nucleates assembly of the body of the 30S subunit. In terms of biological role, with S5 and S12 plays an important role in translational accuracy. The chain is Small ribosomal subunit protein uS4c (rps4) from Calamagrostis epigeios (Wood small-reed grass).